The following is a 467-amino-acid chain: Mothers against decapentaplegic homolog 9 (467 aa).

Residues 16–140 (PAVKRLLGWK…YRRVETPVLP (125 aa)) form the MH1 domain. Positions 68, 113, 125, and 130 each coordinate Zn(2+). The interval 174 to 246 (NATYPDSFQQ…SETQSGQPVD (73 aa)) is disordered. The segment covering 205 to 220 (SYPHSPGSPSEPESPY) has biased composition (low complexity). Residues 273–467 (WCSVAYYELN…SPHNPISSVS (195 aa)) form the MH2 domain.

The protein belongs to the dwarfin/SMAD family. In terms of assembly, interaction with the co-SMAD SMAD4. Interacts with PEBP2-alpha subunit. Interacts with RANBP3L. Post-translationally, phosphorylated on serine by BMP (bone morphogenetic proteins) type 1 receptor kinase. In terms of tissue distribution, expressed in heart, brain, placenta, lung, skeletal muscle, prostate, testis, ovary and small intestine. Also expressed in fetal brain, lung and kidney.

It localises to the cytoplasm. It is found in the nucleus. In terms of biological role, transcriptional modulator activated by BMP (bone morphogenetic proteins) type 1 receptor kinase. SMAD9 is a receptor-regulated SMAD (R-SMAD). This is Mothers against decapentaplegic homolog 9 (SMAD9) from Homo sapiens (Human).